The chain runs to 72 residues: MKKLMLAIFISVLSFPSFSQSTESLDSSKEKITLETKKCDVVKNNSEKKSENMNNTFYCCELCCNPACAGCY.

Positions Met-1–Ser-19 are cleaved as a signal peptide. The propeptide occupies Gln-20–Asn-54. Disulfide bonds link Cys-59/Cys-64, Cys-60/Cys-68, and Cys-63/Cys-71.

The protein belongs to the heat-stable enterotoxin family.

The protein localises to the secreted. Its function is as follows. Toxin which activates the particulate form of guanylate cyclase and increases cyclic GMP levels within the host intestinal epithelial cells. The protein is Heat-stable enterotoxin ST-IA/ST-P (sta1) of Escherichia coli.